The following is a 133-amino-acid chain: Large-conductance mechanosensitive channel (133 aa).

2 helical membrane passes run phenylalanine 10–glycine 30 and glycine 76–valine 96.

This sequence belongs to the MscL family. In terms of assembly, homopentamer.

The protein localises to the cell inner membrane. Functionally, channel that opens in response to stretch forces in the membrane lipid bilayer. May participate in the regulation of osmotic pressure changes within the cell. This chain is Large-conductance mechanosensitive channel, found in Haemophilus ducreyi (strain 35000HP / ATCC 700724).